Consider the following 456-residue polypeptide: Sulfoacetaldehyde dehydrogenase (456 aa).

An NAD(+)-binding site is contributed by 213–218 (GGTAAA). Active-site residues include Glu233 and Cys267.

This sequence belongs to the aldehyde dehydrogenase family. Homotetramer.

It catalyses the reaction sulfoacetaldehyde + NAD(+) + H2O = sulfoacetate + NADH + 2 H(+). Mediates conversion of 2-sulfoacetaldehyde into sulfoacetate. The enzyme is specific for NAD; NADP is not a substrate. Part of a pathway that can utilize the amino group of taurine as a sole source of nitrogen for growth. This chain is Sulfoacetaldehyde dehydrogenase (safD), found in Neptuniibacter caesariensis.